A 306-amino-acid polypeptide reads, in one-letter code: D-alanine--D-alanine ligase (306 aa).

The ATP-grasp domain maps to 101-300; the sequence is RIMLAAAGVP…FGELVTWMVE (200 aa). Position 128–182 (128–182) interacts with ATP; sequence MPTPYVLKPNAGGSSVGVFIVREDQAHPPQELTREDWPHGENLLAEEFIPGLELT. Residues Asp-250, Glu-267, and Asn-269 each contribute to the Mg(2+) site.

Belongs to the D-alanine--D-alanine ligase family. Mg(2+) serves as cofactor. Mn(2+) is required as a cofactor.

It localises to the cytoplasm. The catalysed reaction is 2 D-alanine + ATP = D-alanyl-D-alanine + ADP + phosphate + H(+). The protein operates within cell wall biogenesis; peptidoglycan biosynthesis. Its function is as follows. Cell wall formation. This Xanthobacter autotrophicus (strain ATCC BAA-1158 / Py2) protein is D-alanine--D-alanine ligase.